The primary structure comprises 635 residues: MGKVIGIDLGTTNSCVAVMEGGQPKVIENAEGARTTPSIVAFTKDSERLIGQPAKRQAVTNSENTIFAVKRLIGRRFDDPVTKRDTELVPYHIVRGSNGDAWVKAGGQDYSPSQISAFILQKMKETAESYLGETVDQAVITVPAYFNDAQRQATKDAGKIAGLEVLRIINEPTAAALAYGLDKNDGKTIAVYDLGGGTFDISILEIGDGVFEVKATNGDTFLGGEDFDTKIVSYLAEEFKKAEGIDLTKDRLALQRLKEAAEKAKIELSSAQTTEVNLPFITADATGPKHLVKTISRAELERLVADLIDRTLEPVKKALADAGVKASDIDDVVMVGGMTRMPKVRQVVKEFFGKEPHTGVNPDEVVAMGAAIQAGVLQGDVKDVLLLDVTPLSLGIETLGGVFTRMIDRNTTIPTKKSQVYSTAEDNQNAVTIRVFQGEREMAADNKLLGQFDLVGIPPAPRGVPQIEVTFDIDANGIVNVSAKDKGTGKEQQIRIQASGGLSEGDIDKMVKDAEKFAADDKHRRELAEAKNNGDSLVHTTERQLTELGDKVDAALKTEVEAAVAAVKTALEGEDVAQINEKTQALGQVAMKLGQALYEQDQANNERHDTPETEKAEGDNVVDAEFQEIDDQDKK.

The residue at position 198 (Thr-198) is a Phosphothreonine; by autocatalysis. A disordered region spans residues 597–635 (LYEQDQANNERHDTPETEKAEGDNVVDAEFQEIDDQDKK). The span at 604–618 (NNERHDTPETEKAEG) shows a compositional bias: basic and acidic residues. Residues 620-635 (NVVDAEFQEIDDQDKK) show a composition bias toward acidic residues.

This sequence belongs to the heat shock protein 70 family.

Its function is as follows. Acts as a chaperone. The chain is Chaperone protein DnaK from Zymomonas mobilis subsp. mobilis (strain ATCC 31821 / ZM4 / CP4).